A 378-amino-acid polypeptide reads, in one-letter code: MAHKKVIVLVAGGTGGHLFPAEAVAVELRQRGYDVHLVTDRRAKCFVSCVDEEHTHIVSSATFTRRHPFALIKTCWILLKGMGQSLALFYKLRPVLVGGFGGYPTFPPLLVAALMRCVTFIHEQNAIMGRANRVLAVFVHAIAGGLLSQTGTHAHKTLLIGNPMREVVLKAAKIPYRPSLGEKPFHFLVFGGSQGASFFSRIVPEAIALLNNKIRRRLRIIQQVRGEVVELMKTYRSMGVQAEVAPFFNDMAERMAHAHFILSRAGASSVCEIAVIGRPALLIPYPYALDHDQAANAALLARVGGAQIVSEKDLTAQRLASLLTQACCAPHLLEKQALAAKKVGQPYATRRLADMAEALIAGRSLSDVREEFFDENAV.

UDP-N-acetyl-alpha-D-glucosamine contacts are provided by residues 14-16 (TGG), asparagine 125, arginine 165, serine 193, and glutamine 293.

The protein belongs to the glycosyltransferase 28 family. MurG subfamily.

It is found in the cell inner membrane. It catalyses the reaction di-trans,octa-cis-undecaprenyl diphospho-N-acetyl-alpha-D-muramoyl-L-alanyl-D-glutamyl-meso-2,6-diaminopimeloyl-D-alanyl-D-alanine + UDP-N-acetyl-alpha-D-glucosamine = di-trans,octa-cis-undecaprenyl diphospho-[N-acetyl-alpha-D-glucosaminyl-(1-&gt;4)]-N-acetyl-alpha-D-muramoyl-L-alanyl-D-glutamyl-meso-2,6-diaminopimeloyl-D-alanyl-D-alanine + UDP + H(+). The protein operates within cell wall biogenesis; peptidoglycan biosynthesis. In terms of biological role, cell wall formation. Catalyzes the transfer of a GlcNAc subunit on undecaprenyl-pyrophosphoryl-MurNAc-pentapeptide (lipid intermediate I) to form undecaprenyl-pyrophosphoryl-MurNAc-(pentapeptide)GlcNAc (lipid intermediate II). The sequence is that of UDP-N-acetylglucosamine--N-acetylmuramyl-(pentapeptide) pyrophosphoryl-undecaprenol N-acetylglucosamine transferase from Bartonella quintana (strain Toulouse) (Rochalimaea quintana).